We begin with the raw amino-acid sequence, 77 residues long: Large ribosomal subunit protein bL28 (77 aa).

Belongs to the bacterial ribosomal protein bL28 family.

The polypeptide is Large ribosomal subunit protein bL28 (Dechloromonas aromatica (strain RCB)).